The primary structure comprises 246 residues: Ribonuclease PH (246 aa).

Phosphate contacts are provided by residues Arg91 and Gly129–Arg131.

The protein belongs to the RNase PH family. Homohexameric ring arranged as a trimer of dimers.

The enzyme catalyses tRNA(n+1) + phosphate = tRNA(n) + a ribonucleoside 5'-diphosphate. Phosphorolytic 3'-5' exoribonuclease that plays an important role in tRNA 3'-end maturation. Removes nucleotide residues following the 3'-CCA terminus of tRNAs; can also add nucleotides to the ends of RNA molecules by using nucleoside diphosphates as substrates, but this may not be physiologically important. Probably plays a role in initiation of 16S rRNA degradation (leading to ribosome degradation) during starvation. The protein is Ribonuclease PH of Paraburkholderia xenovorans (strain LB400).